The following is an 85-amino-acid chain: RNA-binding protein Hfq (85 aa).

The region spanning 9–69 (DQLLNTARKD…ISTIIPAKII (61 aa)) is the Sm domain.

Belongs to the Hfq family. Homohexamer.

RNA chaperone that binds small regulatory RNA (sRNAs) and mRNAs to facilitate mRNA translational regulation in response to envelope stress, environmental stress and changes in metabolite concentrations. Also binds with high specificity to tRNAs. This chain is RNA-binding protein Hfq, found in Leptospira interrogans serogroup Icterohaemorrhagiae serovar copenhageni (strain Fiocruz L1-130).